Reading from the N-terminus, the 330-residue chain is uncharacterized protein (330 aa).

Residue 125–132 (GPPGCGKT) coordinates ATP.

Belongs to the AAA ATPase family.

This is an uncharacterized protein from Sinorhizobium fredii (strain NBRC 101917 / NGR234).